Reading from the N-terminus, the 251-residue chain is Long tail fiber protein Gp37 (251 aa).

The interval 134–137 (DVYI) is interaction with the receptor-recognizing protein gp38. Residues 139–237 (SDGRLKINKK…EEIKELKTPF (99 aa)) form the Peptidase S74 domain.

This sequence belongs to the S16-like long tail fiber protein Gp37 family. In terms of assembly, homotrimer. Interacts with the receptor-recognizing protein Gp38. In terms of processing, proteolytic cleavage and release of the chaperone in the host cytosol stabilizes the folded protein.

It is found in the virion. In terms of biological role, constitues the trimeric tip of the long tail fiber that mediates the attachment to the host receptor, together with the receptor-recognizing protein Gp38. The C-terminal chaperone protein mediates homotrimerization and proper folding of the catalytic trimer. In Escherichia coli (Bacteriophage Ox2), this protein is Long tail fiber protein Gp37 (37).